Consider the following 371-residue polypeptide: Monomethylxanthine methyltransferase 2 (371 aa).

8 residues coordinate S-adenosyl-L-homocysteine: tyrosine 18, cysteine 61, asparagine 66, aspartate 100, leucine 101, serine 139, phenylalanine 140, and cysteine 156. Residues tyrosine 157, histidine 160, and tryptophan 161 each coordinate theobromine. Positions 178, 260, 262, and 263 each coordinate Mg(2+). Residue tyrosine 355 participates in theobromine binding.

This sequence belongs to the methyltransferase superfamily. Type-7 methyltransferase family. The cofactor is Mg(2+).

The catalysed reaction is 7-methylxanthine + S-adenosyl-L-methionine = theobromine + S-adenosyl-L-homocysteine + H(+). The protein operates within alkaloid biosynthesis. In terms of biological role, involved in the biosynthesis of caffeine. Catalyzes the conversion of 7-methylxanthine (7mX) to theobromine and with a lower activity of paraxanthine to caffeine. This Coffea canephora (Robusta coffee) protein is Monomethylxanthine methyltransferase 2.